A 307-amino-acid chain; its full sequence is D-alanine--D-alanine ligase (307 aa).

Positions 101 to 301 (KTVMRAAGVS…FGELVRWMVE (201 aa)) constitute an ATP-grasp domain. 127 to 182 (PLTPPYVVKPIAEGSSMGVIIVREERSHPPQILASDEWVYGEEVLAETYIAGRELT) contributes to the ATP binding site. Mg(2+) is bound by residues Asp251, Glu268, and Asn270.

Belongs to the D-alanine--D-alanine ligase family. Mg(2+) is required as a cofactor. It depends on Mn(2+) as a cofactor.

It localises to the cytoplasm. The enzyme catalyses 2 D-alanine + ATP = D-alanyl-D-alanine + ADP + phosphate + H(+). It participates in cell wall biogenesis; peptidoglycan biosynthesis. Cell wall formation. This chain is D-alanine--D-alanine ligase, found in Methylorubrum populi (strain ATCC BAA-705 / NCIMB 13946 / BJ001) (Methylobacterium populi).